The chain runs to 651 residues: Kinesin-like protein KIF22-A (651 aa).

Residues 31–359 enclose the Kinesin motor domain; sequence RVRVAVRLRP…LNFAAKSKQI (329 aa). 116 to 123 contacts ATP; sequence GPTGAGKT. Positions 366–413 are disordered; that stretch reads QETTQTVVQPAMKRPREETGHIAGSQKRKKSKNDSTESSPNSSMDTAG. Positions 401–410 are enriched in polar residues; the sequence is TESSPNSSMD. Positions 452 to 498 form a coiled coil; the sequence is KRERMALLKKWEESQMEIERLKEKQKELEQKAMEAEARLEKSNNSDL. The Important for regulated proteolytic degradation signature appears at 561–564; it reads GLEN.

The protein belongs to the TRAFAC class myosin-kinesin ATPase superfamily. Kinesin family. Ubiquitinated, leading to its subsequent proteasomal degradation.

It localises to the nucleus. Its subcellular location is the cytoplasm. The protein localises to the cytoskeleton. In terms of biological role, kinesin family member that is involved in spindle formation and the movements of chromosomes during mitosis and meiosis. Binds to microtubules and to DNA. This is Kinesin-like protein KIF22-A (kif22-a) from Xenopus laevis (African clawed frog).